We begin with the raw amino-acid sequence, 343 residues long: UDP-3-O-acylglucosamine N-acyltransferase (343 aa).

Catalysis depends on histidine 239, which acts as the Proton acceptor.

Belongs to the transferase hexapeptide repeat family. LpxD subfamily. In terms of assembly, homotrimer.

The enzyme catalyses a UDP-3-O-[(3R)-3-hydroxyacyl]-alpha-D-glucosamine + a (3R)-hydroxyacyl-[ACP] = a UDP-2-N,3-O-bis[(3R)-3-hydroxyacyl]-alpha-D-glucosamine + holo-[ACP] + H(+). It participates in bacterial outer membrane biogenesis; LPS lipid A biosynthesis. Its function is as follows. Catalyzes the N-acylation of UDP-3-O-acylglucosamine using 3-hydroxyacyl-ACP as the acyl donor. Is involved in the biosynthesis of lipid A, a phosphorylated glycolipid that anchors the lipopolysaccharide to the outer membrane of the cell. In Vibrio vulnificus (strain YJ016), this protein is UDP-3-O-acylglucosamine N-acyltransferase.